The primary structure comprises 250 residues: MANIHIVIPARLKSTRLPNKMLADIAGKPMIQRVYEQVTKSKFDSIIIATDSQKIKDIAESFGAKVVLTRDDHQSGTDRIAEAVTKLGFADEDIVVNVQGDEPLIPIENIEQAAQLLIDKSEAVVSTLCEKITDVEDIYNPNNVKVVFDKNNYALYFSRASIPFERGFSEKEQINISEFFRHIGIYAYRVAFLKHYAELTVSPIEKYEALEQLRVLYNGYKIAIEQSAKSTPAGVDTLQDLEKVRKLFNV.

It belongs to the KdsB family.

It localises to the cytoplasm. It carries out the reaction 3-deoxy-alpha-D-manno-oct-2-ulosonate + CTP = CMP-3-deoxy-beta-D-manno-octulosonate + diphosphate. The protein operates within nucleotide-sugar biosynthesis; CMP-3-deoxy-D-manno-octulosonate biosynthesis; CMP-3-deoxy-D-manno-octulosonate from 3-deoxy-D-manno-octulosonate and CTP: step 1/1. It functions in the pathway bacterial outer membrane biogenesis; lipopolysaccharide biosynthesis. In terms of biological role, activates KDO (a required 8-carbon sugar) for incorporation into bacterial lipopolysaccharide in Gram-negative bacteria. The protein is 3-deoxy-manno-octulosonate cytidylyltransferase of Francisella tularensis subsp. holarctica (strain FTNF002-00 / FTA).